The chain runs to 287 residues: Ret finger protein-like 4A (287 aa).

The RING-type; degenerate zinc finger occupies 11-53 (CYFCFRCLESPVYLNCGYICCLKCLDSLEKSPEGDGVLCPTCS). In terms of domain architecture, B30.2/SPRY spans 78–278 (EPQLNFILTM…LSICPVTNPG (201 aa)).

Interacts with PSMB1, UBE2A and CCNB1. In terms of tissue distribution, expressed in the ovaries and oocytes (at protein level). Expression restricted to gonads. In testis, present at later stages of spermatogeneis and abundant in elongating spermatids.

The protein localises to the cytoplasm. It localises to the nucleus. In Mus musculus (Mouse), this protein is Ret finger protein-like 4A (Rfpl4a).